The sequence spans 454 residues: MKKVLIAGVTSGSGKTTAVLGILKALNEKYTIQSYKVGPDYVDTKFHTRITNRPTRNLDNYLVPDPQVLNYLFTANTENIDLGIIEGVMGLYDGLGTDKDAYSTASIAKQLNIPVILVINARATSTSAAAILKGFIDFDKKVPIKGVIINNVMSENHYKLIAGAIHRYLDLPILGYLPHDSTISLPSRQLGLVPDDELPNVDKKIAKVAEDVKAHVDLQKLLSLATSVSEKVVDPFNIPKTRLRLGIAKDKAFNFYYADNIHLLEKTGIELIPFSPISDNHLPDVDALYFGGGYPEEFASRLAANEFLKKEVYEFSQANKPIYAECGGLMYLGKVLKQGENEFPMVGIFDGMSEMTPRLKRFGYCEAYTQVDCMLGNRGQKIVGHEFHHSMFKQLDQQLKPVLLMKKVRDNQIVDTWSGGYQIRKTFASYLHVHFYQNPKLFIQFLNNLGADVQ.

Residues 244 to 440 (RLGIAKDKAF…LHVHFYQNPK (197 aa)) form the GATase cobBQ-type domain. The active-site Nucleophile is Cys326.

The protein belongs to the CobB/CbiA family. The cofactor is Mg(2+).

The enzyme catalyses cob(II)yrinate + 2 L-glutamine + 2 ATP + 2 H2O = cob(II)yrinate a,c diamide + 2 L-glutamate + 2 ADP + 2 phosphate + 2 H(+). It participates in cofactor biosynthesis; adenosylcobalamin biosynthesis; cob(II)yrinate a,c-diamide from sirohydrochlorin (anaerobic route): step 10/10. Its function is as follows. Catalyzes the ATP-dependent amidation of the two carboxylate groups at positions a and c of cobyrinate, using either L-glutamine or ammonia as the nitrogen source. This chain is Cobyrinate a,c-diamide synthase, found in Limosilactobacillus reuteri subsp. reuteri (strain JCM 1112) (Lactobacillus reuteri).